The chain runs to 740 residues: NAD(P)H-quinone oxidoreductase subunit 5, chloroplastic (740 aa).

Helical transmembrane passes span 9-29 (WIIP…LFLF), 40-60 (WAFQ…YLSI), 89-109 (IDPL…MVLI), 125-145 (FAYM…SNLI), 147-167 (IYIF…FWFT), 185-205 (GDFG…SFEF), 219-239 (NEVD…GAVA), 258-278 (TPIS…FLVA), 286-306 (VIPY…LLGA), 327-347 (LGYM…FHLI), 354-374 (ALLF…VGYS), 396-416 (ITFL…CFWS), 425-445 (WLYS…TAFY), 543-563 (LFPI…GIPF), 602-622 (VLSV…YKPI), and 717-737 (SYLF…YLLF).

The protein belongs to the complex I subunit 5 family. In terms of assembly, NDH is composed of at least 16 different subunits, 5 of which are encoded in the nucleus.

It is found in the plastid. It localises to the chloroplast thylakoid membrane. The catalysed reaction is a plastoquinone + NADH + (n+1) H(+)(in) = a plastoquinol + NAD(+) + n H(+)(out). The enzyme catalyses a plastoquinone + NADPH + (n+1) H(+)(in) = a plastoquinol + NADP(+) + n H(+)(out). NDH shuttles electrons from NAD(P)H:plastoquinone, via FMN and iron-sulfur (Fe-S) centers, to quinones in the photosynthetic chain and possibly in a chloroplast respiratory chain. The immediate electron acceptor for the enzyme in this species is believed to be plastoquinone. Couples the redox reaction to proton translocation, and thus conserves the redox energy in a proton gradient. The protein is NAD(P)H-quinone oxidoreductase subunit 5, chloroplastic (ndhF) of Nicotiana sylvestris (Wood tobacco).